A 650-amino-acid chain; its full sequence is Acetyl-coenzyme A synthetase (650 aa).

CoA contacts are provided by residues 191–194 (RGGR), Thr311, and Asn335. ATP is bound by residues 387 to 389 (GEP), 411 to 416 (DTWWQT), Asp500, and Arg515. A CoA-binding site is contributed by Ser523. Residue Arg526 participates in ATP binding. The Mg(2+) site is built by Val537, His539, and Val542. Arg584 provides a ligand contact to CoA. Lys609 carries the post-translational modification N6-acetyllysine.

The protein belongs to the ATP-dependent AMP-binding enzyme family. Mg(2+) is required as a cofactor. Acetylated. Deacetylation by the SIR2-homolog deacetylase activates the enzyme.

The enzyme catalyses acetate + ATP + CoA = acetyl-CoA + AMP + diphosphate. In terms of biological role, catalyzes the conversion of acetate into acetyl-CoA (AcCoA), an essential intermediate at the junction of anabolic and catabolic pathways. AcsA undergoes a two-step reaction. In the first half reaction, AcsA combines acetate with ATP to form acetyl-adenylate (AcAMP) intermediate. In the second half reaction, it can then transfer the acetyl group from AcAMP to the sulfhydryl group of CoA, forming the product AcCoA. The protein is Acetyl-coenzyme A synthetase of Shewanella sp. (strain W3-18-1).